The primary structure comprises 301 residues: MEKDCQDIQQLDSEENDHQLSGDDEHGSHVQDPRIENPHWKGQPLSRPFPQRLCSTFRLSLLALAFNILLLVVICVVSSQSIQLQEEFRTLKETFSNFSSSTLMEFGALDTLGGSTNAILTSWLAQLEEKQQQLKADHSTLLFHLKHFPMDLRTLTCQLAYFQSNGTECCPVNWVEFGGSCYWFSRDGLTWAEADQYCQLENAHLLVINSREEQDFVVKHRSQFHIWIGLTDRDGSWKWVDGTDYRSNYRNWAFTQPDNWQGHEQGGGEDCAEILSDGHWNDNFCQQVNRWVCEKRRNITH.

The interval 1–43 (MEKDCQDIQQLDSEENDHQLSGDDEHGSHVQDPRIENPHWKGQ) is disordered. Residues 1 to 58 (MEKDCQDIQQLDSEENDHQLSGDDEHGSHVQDPRIENPHWKGQPLSRPFPQRLCSTFR) lie on the Cytoplasmic side of the membrane. Ser13 is modified (phosphoserine). Over residues 16–39 (NDHQLSGDDEHGSHVQDPRIENPH) the composition is skewed to basic and acidic residues. A lipid anchor (S-palmitoyl cysteine) is attached at Cys54. Residues 59–79 (LSLLALAFNILLLVVICVVSS) form a helical; Signal-anchor for type II membrane protein membrane-spanning segment. At 80 to 301 (QSIQLQEEFR…VCEKRRNITH (222 aa)) the chain is on the extracellular side. Residues Asn97 and Asn165 are each glycosylated (N-linked (GlcNAc...) asparagine). In terms of domain architecture, C-type lectin spans 169–295 (CCPVNWVEFG…QQVNRWVCEK (127 aa)). Cystine bridges form between Cys170-Cys181, Cys198-Cys293, and Cys271-Cys285. N-linked (GlcNAc...) asparagine glycosylation occurs at Asn298.

As to quaternary structure, interacts with LASS2. In terms of tissue distribution, expressed exclusively in hepatic parenchymal cells.

It is found in the membrane. Its function is as follows. Mediates the endocytosis of plasma glycoproteins to which the terminal sialic acid residue on their complex carbohydrate moieties has been removed. The receptor recognizes terminal galactose and N-acetylgalactosamine units. After ligand binding to the receptor, the resulting complex is internalized and transported to a sorting organelle, where receptor and ligand are disassociated. The receptor then returns to the cell membrane surface. The polypeptide is Asialoglycoprotein receptor 2 (Asgr2) (Mus musculus (Mouse)).